Reading from the N-terminus, the 177-residue chain is Large ribosomal subunit protein uL6 (177 aa).

This sequence belongs to the universal ribosomal protein uL6 family. In terms of assembly, part of the 50S ribosomal subunit.

In terms of biological role, this protein binds to the 23S rRNA, and is important in its secondary structure. It is located near the subunit interface in the base of the L7/L12 stalk, and near the tRNA binding site of the peptidyltransferase center. This Verminephrobacter eiseniae (strain EF01-2) protein is Large ribosomal subunit protein uL6.